Reading from the N-terminus, the 331-residue chain is ADP-L-glycero-D-manno-heptose-6-epimerase (331 aa).

Residues 11–12 (FI), 32–33 (DN), Lys-39, Lys-54, 75–79 (EGACS), and Asn-92 contribute to the NADP(+) site. Tyr-139 (proton acceptor) is an active-site residue. Lys-143 lines the NADP(+) pocket. Asn-168 contacts substrate. NADP(+) contacts are provided by Val-169 and Lys-177. Lys-177 functions as the Proton acceptor in the catalytic mechanism. Residues Arg-179, His-186, 200–203 (FGEY), Arg-213, and Tyr-292 contribute to the substrate site.

Belongs to the NAD(P)-dependent epimerase/dehydratase family. HldD subfamily. Homopentamer. The cofactor is NADP(+).

The catalysed reaction is ADP-D-glycero-beta-D-manno-heptose = ADP-L-glycero-beta-D-manno-heptose. The protein operates within nucleotide-sugar biosynthesis; ADP-L-glycero-beta-D-manno-heptose biosynthesis; ADP-L-glycero-beta-D-manno-heptose from D-glycero-beta-D-manno-heptose 7-phosphate: step 4/4. In terms of biological role, catalyzes the interconversion between ADP-D-glycero-beta-D-manno-heptose and ADP-L-glycero-beta-D-manno-heptose via an epimerization at carbon 6 of the heptose. This Cupriavidus necator (strain ATCC 17699 / DSM 428 / KCTC 22496 / NCIMB 10442 / H16 / Stanier 337) (Ralstonia eutropha) protein is ADP-L-glycero-D-manno-heptose-6-epimerase.